The primary structure comprises 314 residues: Nodulation protein D 1 (314 aa).

Residues 6–63 (LDLNLLVVLDALLTERTLTAAASSINLSQPAMSAAVARLRDYFNDELFTTSGRERVLT) enclose the HTH lysR-type domain. Positions 23–42 (LTAAASSINLSQPAMSAAVA) form a DNA-binding region, H-T-H motif.

The protein belongs to the LysR transcriptional regulatory family.

Functionally, nodD regulates the expression of the nodABCFE genes which encode other nodulation proteins. NodD is also a negative regulator of its own expression. Binds flavenoids as inducers. The sequence is that of Nodulation protein D 1 (nodD1) from Mesorhizobium japonicum (strain LMG 29417 / CECT 9101 / MAFF 303099) (Mesorhizobium loti (strain MAFF 303099)).